The primary structure comprises 178 residues: Pyruvate synthase subunit PorC (178 aa).

As to quaternary structure, heterotetramer of one alpha, one beta, one delta and one gamma chain.

The catalysed reaction is 2 oxidized [2Fe-2S]-[ferredoxin] + pyruvate + CoA = 2 reduced [2Fe-2S]-[ferredoxin] + acetyl-CoA + CO2 + H(+). This Methanocaldococcus jannaschii (strain ATCC 43067 / DSM 2661 / JAL-1 / JCM 10045 / NBRC 100440) (Methanococcus jannaschii) protein is Pyruvate synthase subunit PorC (porC).